The sequence spans 486 residues: Nuclear distribution protein PAC1 (486 aa).

Residues 66-99 (STVLRLQKKIIDLENEISNLNNIINSTNSDNNGI) are a coiled coil. WD repeat units follow at residues 119–158 (QCEN…NTIP), 164–205 (AHTR…RTLN), 206–246 (GHEH…SLKS), 249–291 (GHSE…GVAM), 294–328 (GHSH…FPTI), 329–368 (PLEL…IAPH), 389–428 (GHSS…ETGY), and 437–483 (GHDG…NSIK).

Belongs to the WD repeat LIS1/nudF family. In terms of assembly, self-associates. Interacts with NDL1 and dynein.

The protein localises to the cytoplasm. It localises to the cytoskeleton. Its subcellular location is the spindle pole. Positively regulates the activity of the minus-end directed microtubule motor protein dynein. Plays a central role in positioning the mitotic spindle at the bud neck during cell division. Targets cytoplasmic dynein to microtubule plus ends, thereby promoting dynein-mediated microtubule sliding along the bud cortex and consequently the movement of the mitotic spindle to the bud neck. This is Nuclear distribution protein PAC1 from Candida albicans (strain SC5314 / ATCC MYA-2876) (Yeast).